Reading from the N-terminus, the 391-residue chain is Succinate--CoA ligase [ADP-forming] subunit beta (391 aa).

The 238-residue stretch at Lys9–Gln246 folds into the ATP-grasp domain. ATP contacts are provided by residues Lys46, Gly53–Gly55, Glu99, Leu102, and Glu107. Mg(2+) contacts are provided by Asn199 and Asp213. Residues Asn266 and Gly323 to Val325 contribute to the substrate site.

Belongs to the succinate/malate CoA ligase beta subunit family. In terms of assembly, heterotetramer of two alpha and two beta subunits. Requires Mg(2+) as cofactor.

It catalyses the reaction succinate + ATP + CoA = succinyl-CoA + ADP + phosphate. The enzyme catalyses GTP + succinate + CoA = succinyl-CoA + GDP + phosphate. It participates in carbohydrate metabolism; tricarboxylic acid cycle; succinate from succinyl-CoA (ligase route): step 1/1. Its function is as follows. Succinyl-CoA synthetase functions in the citric acid cycle (TCA), coupling the hydrolysis of succinyl-CoA to the synthesis of either ATP or GTP and thus represents the only step of substrate-level phosphorylation in the TCA. The beta subunit provides nucleotide specificity of the enzyme and binds the substrate succinate, while the binding sites for coenzyme A and phosphate are found in the alpha subunit. The polypeptide is Succinate--CoA ligase [ADP-forming] subunit beta (Alkalilimnicola ehrlichii (strain ATCC BAA-1101 / DSM 17681 / MLHE-1)).